Reading from the N-terminus, the 340-residue chain is Glutamine synthetase (340 aa).

The 80-residue stretch at Ile3–Thr82 folds into the GS beta-grasp domain. In terms of domain architecture, GS catalytic spans Thr88 to Ile340. Mg(2+) contacts are provided by Glu109, Glu111, Glu171, and Glu178. Glu276 contributes to the L-glutamate binding site.

Belongs to the glutamine synthetase family. Homooctamer and homotetramer. Mg(2+) is required as a cofactor.

The protein resides in the cytoplasm. It carries out the reaction L-glutamate + NH4(+) + ATP = L-glutamine + ADP + phosphate + H(+). Its function is as follows. Catalyzes the ATP-dependent biosynthesis of glutamine from glutamate and ammonia. The protein is Glutamine synthetase of Streptomyces hygroscopicus.